Consider the following 434-residue polypeptide: Potassium/proton antiporter CemA (434 aa).

The next 5 membrane-spanning stretches (helical) occupy residues 75–95 (LLEY…SLFF), 210–230 (LASL…SFFF), 311–331 (IVLH…LFIL), 359–379 (ILLL…EIVI), and 395–415 (ISCF…YLIF).

The protein belongs to the CemA family.

Its subcellular location is the plastid. It is found in the chloroplast inner membrane. It catalyses the reaction K(+)(in) + H(+)(out) = K(+)(out) + H(+)(in). Functionally, contributes to K(+)/H(+) antiport activity by supporting proton efflux to control proton extrusion and homeostasis in chloroplasts in a light-dependent manner to modulate photosynthesis. Prevents excessive induction of non-photochemical quenching (NPQ) under continuous-light conditions. Indirectly promotes efficient inorganic carbon uptake into chloroplasts. This is Potassium/proton antiporter CemA from Marchantia polymorpha (Common liverwort).